The following is a 260-amino-acid chain: Ubiquinone/menaquinone biosynthesis C-methyltransferase UbiE (260 aa).

Residues T83, D104, and 132–133 (NA) contribute to the S-adenosyl-L-methionine site.

This sequence belongs to the class I-like SAM-binding methyltransferase superfamily. MenG/UbiE family.

The catalysed reaction is a 2-demethylmenaquinol + S-adenosyl-L-methionine = a menaquinol + S-adenosyl-L-homocysteine + H(+). The enzyme catalyses a 2-methoxy-6-(all-trans-polyprenyl)benzene-1,4-diol + S-adenosyl-L-methionine = a 5-methoxy-2-methyl-3-(all-trans-polyprenyl)benzene-1,4-diol + S-adenosyl-L-homocysteine + H(+). It participates in quinol/quinone metabolism; menaquinone biosynthesis; menaquinol from 1,4-dihydroxy-2-naphthoate: step 2/2. Its pathway is cofactor biosynthesis; ubiquinone biosynthesis. Its function is as follows. Methyltransferase required for the conversion of demethylmenaquinol (DMKH2) to menaquinol (MKH2) and the conversion of 2-polyprenyl-6-methoxy-1,4-benzoquinol (DDMQH2) to 2-polyprenyl-3-methyl-6-methoxy-1,4-benzoquinol (DMQH2). The protein is Ubiquinone/menaquinone biosynthesis C-methyltransferase UbiE of Bartonella henselae (strain ATCC 49882 / DSM 28221 / CCUG 30454 / Houston 1) (Rochalimaea henselae).